We begin with the raw amino-acid sequence, 561 residues long: Mesoderm induction early response protein 2 (561 aa).

Disordered regions lie at residues 1 to 28 and 52 to 188; these read MAEA…GEPN and QNYG…EDPL. The residue at position 11 (S11) is a Phosphoserine. A compositionally biased stretch (polar residues) spans 140 to 165; it reads QSSADDLTPSVTSHEASDLFPSQSGS. Residues 195-292 form the ELM2 domain; the sequence is KEIMVGPQFQ…EALRRLRFNV (98 aa). The SANT domain maps to 297–349; it reads DGLCAWSEEERRNFEHGFRVHGKNFHLIQANKVRTRSVGECVEYYYLWKKSER. The segment at 360–515 is disordered; it reads GRRKYGPSGN…DGEPEETVGP (156 aa). Positions 417–428 are enriched in low complexity; that stretch reads LSMGSSMSRSLG. Pro residues predominate over residues 439 to 451; it reads SSEPGPRLFPPLD. Residues 453–482 are compositionally biased toward low complexity; that stretch reads PSALPSSRRPPALAEPAFFPPATAAPEPGA.

Part of a complex containing at least CDYL, MIER1, MIER2, HDAC1 and HDAC2.

The protein localises to the nucleus. In terms of biological role, transcriptional repressor. The chain is Mesoderm induction early response protein 2 (MIER2) from Bos taurus (Bovine).